Here is a 176-residue protein sequence, read N- to C-terminus: Translation initiation factor IF-3 (176 aa).

It belongs to the IF-3 family. As to quaternary structure, monomer.

The protein localises to the cytoplasm. Functionally, IF-3 binds to the 30S ribosomal subunit and shifts the equilibrium between 70S ribosomes and their 50S and 30S subunits in favor of the free subunits, thus enhancing the availability of 30S subunits on which protein synthesis initiation begins. In Streptococcus equi subsp. zooepidemicus (strain H70), this protein is Translation initiation factor IF-3.